The sequence spans 773 residues: Probable dipeptidyl peptidase 4 (773 aa).

Residues 1–18 (MKLSVLSVLLVSVAQAAA) form the signal peptide. 6 N-linked (GlcNAc...) asparagine glycosylation sites follow: Asn-37, Asn-80, Asn-112, Asn-220, Asn-471, and Asn-496. The active-site Charge relay system is the Ser-619. Residue Asn-671 is glycosylated (N-linked (GlcNAc...) asparagine). Residues Asp-696 and His-731 each act as charge relay system in the active site.

It belongs to the peptidase S9B family.

It is found in the secreted. It carries out the reaction Release of an N-terminal dipeptide, Xaa-Yaa-|-Zaa-, from a polypeptide, preferentially when Yaa is Pro, provided Zaa is neither Pro nor hydroxyproline.. Extracellular dipeptidyl-peptidase which removes N-terminal dipeptides sequentially from polypeptides having unsubstituted N-termini provided that the penultimate residue is proline. This Emericella nidulans (strain FGSC A4 / ATCC 38163 / CBS 112.46 / NRRL 194 / M139) (Aspergillus nidulans) protein is Probable dipeptidyl peptidase 4 (dpp4).